We begin with the raw amino-acid sequence, 276 residues long: Vitamin B12-binding protein (276 aa).

The N-terminal stretch at 1-20 (MIVRFLCWLTGLLLCTAAYA) is a signal peptide. In terms of domain architecture, Fe/B12 periplasmic-binding spans 24 to 273 (RVISLAPHAT…QLTALSPGSS (250 aa)). A disulfide bond links Cys186 and Cys262.

The protein belongs to the BtuF family. In terms of assembly, the complex is composed of two ATP-binding proteins (BtuD), two transmembrane proteins (BtuC) and a solute-binding protein (BtuF).

Its subcellular location is the periplasm. Functionally, part of the ABC transporter complex BtuCDF involved in vitamin B12 import. Binds vitamin B12 and delivers it to the periplasmic surface of BtuC. This is Vitamin B12-binding protein from Pectobacterium carotovorum subsp. carotovorum (strain PC1).